The sequence spans 428 residues: AP-1 complex subunit mu (428 aa).

Position 2 is an N-acetylalanine; partial (A2). The MHD domain maps to 169–426 (KNEVFLDVVE…VCLSGDYQFR (258 aa)).

It belongs to the adaptor complexes medium subunit family. Adaptor protein complex 1 (AP-1) is a heterotetramer composed of two large adaptins (gamma-type subunit and beta-type subunit), a medium adaptin (mu-type subunit) and a small adaptin (sigma-type subunit).

The protein localises to the golgi apparatus. Its subcellular location is the trans-Golgi network. It is found in the cytoplasmic vesicle. It localises to the clathrin-coated vesicle membrane. In terms of biological role, subunit of clathrin-associated adaptor protein complex 1 that plays a role in protein sorting in the trans-Golgi network (TGN) and endosomes. The AP complexes mediate the recruitment of clathrin to membranes and the recognition of sorting signals within the cytosolic tails of transmembrane cargo molecules. Also involved in early steps of phagocytosis and macropinocytosis. The sequence is that of AP-1 complex subunit mu (apm1) from Dictyostelium discoideum (Social amoeba).